A 145-amino-acid polypeptide reads, in one-letter code: D-aminoacyl-tRNA deacylase (145 aa).

The Gly-cisPro motif, important for rejection of L-amino acids signature appears at 137–138; sequence GP.

This sequence belongs to the DTD family. As to quaternary structure, homodimer.

The protein localises to the cytoplasm. It carries out the reaction glycyl-tRNA(Ala) + H2O = tRNA(Ala) + glycine + H(+). The catalysed reaction is a D-aminoacyl-tRNA + H2O = a tRNA + a D-alpha-amino acid + H(+). In terms of biological role, an aminoacyl-tRNA editing enzyme that deacylates mischarged D-aminoacyl-tRNAs. Also deacylates mischarged glycyl-tRNA(Ala), protecting cells against glycine mischarging by AlaRS. Acts via tRNA-based rather than protein-based catalysis; rejects L-amino acids rather than detecting D-amino acids in the active site. By recycling D-aminoacyl-tRNA to D-amino acids and free tRNA molecules, this enzyme counteracts the toxicity associated with the formation of D-aminoacyl-tRNA entities in vivo and helps enforce protein L-homochirality. The sequence is that of D-aminoacyl-tRNA deacylase from Pseudomonas paraeruginosa (strain DSM 24068 / PA7) (Pseudomonas aeruginosa (strain PA7)).